A 43-amino-acid chain; its full sequence is ERDSCVEKSKCGKYGYYGQCDECCKKAGDRAGTCVYYKCKCNP.

Intrachain disulfides connect cysteine 5–cysteine 23, cysteine 11–cysteine 34, cysteine 20–cysteine 39, and cysteine 24–cysteine 41.

As to expression, expressed by the venom gland.

It localises to the secreted. Its function is as follows. Reversibly blocks Kv11/ERG potassium channels. Is less toxic than ergtoxin (AC Q86QT3). This Centruroides sculpturatus (Arizona bark scorpion) protein is Potassium channel toxin gamma-KTx 4.12.